The sequence spans 354 residues: UDP-N-acetylglucosamine--N-acetylmuramyl-(pentapeptide) pyrophosphoryl-undecaprenol N-acetylglucosamine transferase (354 aa).

UDP-N-acetyl-alpha-D-glucosamine is bound by residues Ser-196 and Gln-288.

The protein belongs to the glycosyltransferase 28 family. MurG subfamily.

It localises to the cell membrane. It carries out the reaction Mur2Ac(oyl-L-Ala-gamma-D-Glu-L-Lys-D-Ala-D-Ala)-di-trans,octa-cis-undecaprenyl diphosphate + UDP-N-acetyl-alpha-D-glucosamine = beta-D-GlcNAc-(1-&gt;4)-Mur2Ac(oyl-L-Ala-gamma-D-Glu-L-Lys-D-Ala-D-Ala)-di-trans,octa-cis-undecaprenyl diphosphate + UDP + H(+). The protein operates within cell wall biogenesis; peptidoglycan biosynthesis. Cell wall formation. Catalyzes the transfer of a GlcNAc subunit on undecaprenyl-pyrophosphoryl-MurNAc-pentapeptide (lipid intermediate I) to form undecaprenyl-pyrophosphoryl-MurNAc-(pentapeptide)GlcNAc (lipid intermediate II). The chain is UDP-N-acetylglucosamine--N-acetylmuramyl-(pentapeptide) pyrophosphoryl-undecaprenol N-acetylglucosamine transferase from Streptococcus suis (strain 98HAH33).